The chain runs to 156 residues: Snaclec A4 (156 aa).

Residues 1–23 (MGRSISVSFGLLVVFLSLSGTGA) form the signal peptide. Cys27 and Cys38 are disulfide-bonded. One can recognise a C-type lectin domain in the interval 34 to 155 (HEGHCYKVFN…CGQPYRFTCE (122 aa)). N-linked (GlcNAc...) asparagine glycosylation occurs at Asn45. 2 disulfide bridges follow: Cys55–Cys154 and Cys129–Cys146.

It belongs to the snaclec family. As to quaternary structure, heterodimer; disulfide-linked. As to expression, expressed by the venom gland.

It localises to the secreted. Functionally, interferes with one step of hemostasis (modulation of platelet aggregation, or coagulation cascade, for example). The polypeptide is Snaclec A4 (Macrovipera lebetinus (Levantine viper)).